Consider the following 339-residue polypeptide: NmrA-like family domain-containing oxidoreductase notA (339 aa).

NADP(+) contacts are provided by residues 13-18 (GATGAQ), 39-43 (RKPDS), 60-61 (DG), 81-83 (TNS), lysine 140, and 164-167 (YMGI).

Belongs to the NmrA-type oxidoreductase family.

Functionally, nmrA-like family domain-containing oxidoreductase; part of the gene cluster that mediates the biosynthesis of notoamide, a fungal indole alkaloid that belongs to a family of natural products containing a characteristic bicyclo[2.2.2]diazaoctane core. The first step of notoamide biosynthesis involves coupling of L-proline and L-tryptophan by the bimodular NRPS notE, to produce cyclo-L-tryptophan-L-proline called brevianamide F. The reverse prenyltransferase notF then acts as a deoxybrevianamide E synthase and converts brevianamide F to deoxybrevianamide E via reverse prenylation at C-2 of the indole ring leading to the bicyclo[2.2.2]diazaoctane core. Deoxybrevianamide E is further hydroxylated at C-6 of the indole ring, likely catalyzed by the cytochrome P450 monooxygenase notG, to yield 6-hydroxy-deoxybrevianamide E. 6-hydroxy-deoxybrevianamide E is a specific substrate of the prenyltransferase notC for normal prenylation at C-7 to produce 6-hydroxy-7-prenyl-deoxybrevianamide, also called notoamide S. As the proposed pivotal branching point in notoamide biosynthesis, notoamide S can be diverted to notoamide E through an oxidative pyran ring closure putatively catalyzed by either notH cytochrome P450 monooxygenase or the notD FAD-linked oxidoreductase. This step would be followed by an indole 2,3-epoxidation-initiated pinacol-like rearrangement catalyzed by the notB FAD-dependent monooxygenase leading to the formation of notoamide C and notoamide D. On the other hand notoamide S is converted to notoamide T by notH (or notD), a bifunctional oxidase that also functions as the intramolecular Diels-Alderase responsible for generation of (+)-notoamide T. To generate antipodal (-)-notoaminide T, notH' (or notD') in Aspergillus versicolor is expected to catalyze a Diels-Alder reaction leading to the opposite stereochemistry. The remaining oxidoreductase notD (or notH) likely catalyzes the oxidative pyran ring formation to yield (+)-stephacidin A. The FAD-dependent monooxygenase notI is highly similar to notB and is predicted to catalyze a similar conversion from (+)-stephacidin A to (-)-notoamide B via the 2,3-epoxidation of (+)-stephacidin A followed by a pinacol-type rearrangement. Finally, it remains unclear which enzyme could be responsible for the final hydroxylation steps leading to notoamide A and sclerotiamide. The chain is NmrA-like family domain-containing oxidoreductase notA from Aspergillus sp. (strain MF297-2).